The following is a 249-amino-acid chain: 2,3-bisphosphoglycerate-dependent phosphoglycerate mutase (249 aa).

Substrate-binding positions include R8 to N15, T21 to G22, R60, E87 to Y90, K98, R114 to R115, and G183 to N184. H9 functions as the Tele-phosphohistidine intermediate in the catalytic mechanism. Catalysis depends on E87, which acts as the Proton donor/acceptor.

This sequence belongs to the phosphoglycerate mutase family. BPG-dependent PGAM subfamily. As to quaternary structure, homodimer.

It carries out the reaction (2R)-2-phosphoglycerate = (2R)-3-phosphoglycerate. The protein operates within carbohydrate degradation; glycolysis; pyruvate from D-glyceraldehyde 3-phosphate: step 3/5. Functionally, catalyzes the interconversion of 2-phosphoglycerate and 3-phosphoglycerate. The chain is 2,3-bisphosphoglycerate-dependent phosphoglycerate mutase from Aromatoleum aromaticum (strain DSM 19018 / LMG 30748 / EbN1) (Azoarcus sp. (strain EbN1)).